A 643-amino-acid polypeptide reads, in one-letter code: Threonine--tRNA ligase (643 aa).

Residues 1–61 (MIEIFIEDLN…NQSGNLKFLK (61 aa)) enclose the TGS domain. The catalytic stretch occupies residues 246 to 539 (DHRKIGKDLE…LLEHYAGFLP (294 aa)). The Zn(2+) site is built by Cys339, His390, and His516.

The protein belongs to the class-II aminoacyl-tRNA synthetase family. Homodimer. It depends on Zn(2+) as a cofactor.

Its subcellular location is the cytoplasm. The catalysed reaction is tRNA(Thr) + L-threonine + ATP = L-threonyl-tRNA(Thr) + AMP + diphosphate + H(+). Catalyzes the attachment of threonine to tRNA(Thr) in a two-step reaction: L-threonine is first activated by ATP to form Thr-AMP and then transferred to the acceptor end of tRNA(Thr). Also edits incorrectly charged L-seryl-tRNA(Thr). The sequence is that of Threonine--tRNA ligase from Sulfurihydrogenibium sp. (strain YO3AOP1).